We begin with the raw amino-acid sequence, 468 residues long: Putative proline/betaine transporter (468 aa).

Helical transmembrane passes span 20–42, 63–83, 91–111, 115–135, 164–184, 191–211, 246–266, 284–304, 312–332, 336–356, 376–396, and 403–423; these read VFAT…YTTA, FAAL…FGII, VVLT…GVLP, MIGL…GFST, IGTL…SFFL, AWGW…GLYL, ILVC…VTAY, VLIT…GKLA, VFLI…SLLN, LPFI…YEAT, VTFN…NSWL, and IYAP…VIAV.

This sequence belongs to the major facilitator superfamily. Metabolite:H+ Symporter (MHS) family (TC 2.A.1.6) family.

Its subcellular location is the cell membrane. Its function is as follows. May be a proton symporter involved in the uptake of osmolytes such as proline and glycine betaine. The sequence is that of Putative proline/betaine transporter (proP) from Staphylococcus haemolyticus (strain JCSC1435).